We begin with the raw amino-acid sequence, 109 residues long: Protein phosphatase 1 regulatory subunit 1C (109 aa).

Residues 25–109 (AEQIRKRRPT…TNEREEQRDH (85 aa)) are disordered. Positions 45–54 (NPPEIDDKRG) are enriched in basic and acidic residues. Over residues 55–75 (PNTQGELQNASPKQRKQSVYT) the composition is skewed to polar residues. A compositionally biased stretch (basic and acidic residues) spans 100 to 109 (TNEREEQRDH).

It belongs to the protein phosphatase inhibitor 1 family.

The protein localises to the cytoplasm. Functionally, may increase cell susceptibility to TNF-induced apoptosis. In Homo sapiens (Human), this protein is Protein phosphatase 1 regulatory subunit 1C (PPP1R1C).